Reading from the N-terminus, the 525-residue chain is Peptide chain release factor 3 (525 aa).

The tr-type G domain occupies 9-276 (AKRRTFAIIS…GFTRYAPAPQ (268 aa)). Residues 18-25 (SHPDAGKT), 86-90 (DTPGH), and 140-143 (NKFD) each bind GTP.

Belongs to the TRAFAC class translation factor GTPase superfamily. Classic translation factor GTPase family. PrfC subfamily.

It is found in the cytoplasm. Its function is as follows. Increases the formation of ribosomal termination complexes and stimulates activities of RF-1 and RF-2. It binds guanine nucleotides and has strong preference for UGA stop codons. It may interact directly with the ribosome. The stimulation of RF-1 and RF-2 is significantly reduced by GTP and GDP, but not by GMP. In Francisella tularensis subsp. holarctica (strain FTNF002-00 / FTA), this protein is Peptide chain release factor 3.